The primary structure comprises 176 residues: Ribosome rescue factor SmrB (176 aa).

Positions 97–172 (LDMHGMTQQE…GDGALLVLLS (76 aa)) constitute a Smr domain.

The protein belongs to the SmrB family. Associates with collided ribosomes, but not with correctly translating polysomes.

Functionally, acts as a ribosome collision sensor. Detects stalled/collided disomes (pairs of ribosomes where the leading ribosome is stalled and a second ribosome has collided with it) and endonucleolytically cleaves mRNA at the 5' boundary of the stalled ribosome. Stalled/collided disomes form a new interface (primarily via the 30S subunits) that binds SmrB. Cleaved mRNA becomes available for tmRNA ligation, leading to ribosomal subunit dissociation and rescue of stalled ribosomes. The chain is Ribosome rescue factor SmrB from Vibrio campbellii (strain ATCC BAA-1116).